We begin with the raw amino-acid sequence, 553 residues long: Serine protease 53 (553 aa).

The N-terminal stretch at 1–23 (MKWCWGPVLLIAGATVLMEGLQA) is a signal peptide. Peptidase S1 domains lie at 24–273 (AQRA…ARVQ) and 294–526 (VACG…SLDW). The tract at residues 27 to 46 (ACGQRGPGPPKPQEGNTVPG) is disordered. A disulfide bridge links Cys-62 with Cys-78. Residues His-77 and Asp-128 each act as charge relay system in the active site. Cystine bridges form between Cys-158/Cys-230, Cys-187/Cys-209, Cys-220/Cys-249, and Cys-326/Cys-342. Active-site charge relay system residues include Ser-224, His-341, and Asp-382. Disulfide bonds link Cys-444/Cys-464 and Cys-474/Cys-502. The Charge relay system role is filled by Ser-478.

Belongs to the peptidase S1 family. As to expression, predominantly detected in testis, liver, heart and ovary, as well as in several tumor cell lines.

It is found in the secreted. Functionally, in vitro can degrade the fibrinogen alpha chain of as well as pro-urokinase-type plasminogen activator. This Homo sapiens (Human) protein is Serine protease 53 (PRSS53).